Reading from the N-terminus, the 206-residue chain is Probable GTP-binding protein EngB (206 aa).

The 189-residue stretch at 7-195 (DCDEVVLLGR…EEALQAIFSD (189 aa)) folds into the EngB-type G domain. GTP is bound by residues 15-22 (GRSNVGKS), 41-45 (GVTRS), 60-63 (DLPG), 140-143 (NKID), and 175-177 (ISA). Mg(2+) contacts are provided by S22 and T43.

Belongs to the TRAFAC class TrmE-Era-EngA-EngB-Septin-like GTPase superfamily. EngB GTPase family. Mg(2+) is required as a cofactor.

Its function is as follows. Necessary for normal cell division and for the maintenance of normal septation. The chain is Probable GTP-binding protein EngB from Haloquadratum walsbyi (strain DSM 16790 / HBSQ001).